A 367-amino-acid chain; its full sequence is 4-hydroxy-3-methylbut-2-en-1-yl diphosphate synthase (flavodoxin) (367 aa).

Residues Cys268, Cys271, Cys303, and Glu310 each coordinate [4Fe-4S] cluster.

It belongs to the IspG family. [4Fe-4S] cluster is required as a cofactor.

The catalysed reaction is (2E)-4-hydroxy-3-methylbut-2-enyl diphosphate + oxidized [flavodoxin] + H2O + 2 H(+) = 2-C-methyl-D-erythritol 2,4-cyclic diphosphate + reduced [flavodoxin]. The protein operates within isoprenoid biosynthesis; isopentenyl diphosphate biosynthesis via DXP pathway; isopentenyl diphosphate from 1-deoxy-D-xylulose 5-phosphate: step 5/6. Its function is as follows. Converts 2C-methyl-D-erythritol 2,4-cyclodiphosphate (ME-2,4cPP) into 1-hydroxy-2-methyl-2-(E)-butenyl 4-diphosphate. In Shouchella clausii (strain KSM-K16) (Alkalihalobacillus clausii), this protein is 4-hydroxy-3-methylbut-2-en-1-yl diphosphate synthase (flavodoxin).